We begin with the raw amino-acid sequence, 181 residues long: GTPase RhebL1 (181 aa).

GTP contacts are provided by residues 30–36, Gly61, 117–120, and 147–148; these read LEDYDPT, NKAD, and SA. An Effector region motif is present at residues 33–41; the sequence is YDPTVENTY. Thr36 provides a ligand contact to Mg(2+). The residue at position 178 (Cys178) is a Cysteine methyl ester. Residue Cys178 is the site of S-farnesyl cysteine attachment. Positions 179 to 181 are cleaved as a propeptide — removed in mature form; it reads HLM.

Belongs to the small GTPase superfamily. Rheb family. In terms of assembly, interacts with MTOR.

It is found in the endomembrane system. It localises to the cytoplasm. The enzyme catalyses GTP + H2O = GDP + phosphate + H(+). Binds GTP and exhibits intrinsic GTPase activity. May activate NF-kappa-B-mediated gene transcription. Promotes signal transduction through MTOR, activates RPS6KB1, and is a downstream target of the small GTPase-activating proteins TSC1 and TSC2. The sequence is that of GTPase RhebL1 (RHEBL1) from Bos taurus (Bovine).